A 223-amino-acid chain; its full sequence is UPF0502 protein Avin_04790 (223 aa).

The protein belongs to the UPF0502 family.

The chain is UPF0502 protein Avin_04790 from Azotobacter vinelandii (strain DJ / ATCC BAA-1303).